The sequence spans 1670 residues: MAHAQTTEVCLSFHRSLLFPMGASQVVESVRFSFMTEQDVRKHSFLKVTSPILHDNVGNPFPGGLYDLKLGPKDDKQACNSCGQLKLACPGHCGHIELVFPIYHPLLFNLLFNFLQRACFFCHHFMAKPEDVERAVSQLKLIIKGDIVSAKQLESNTPTKSKSSDESCESVVTTDSSEECEDSDVEDQRWTSLQFAEVTAVLKNFMRLSSKSCSRCKGINPKLEKPMFGWVRMRAMKDSDVGANVIRGLKLKKSTSSVENPDGFDDSGIDALSEVEDGDKETREKSTEVAAEFEEHNSKRDLLPSEVRNILKHLWQNEHEFCSFIGDLWQSGSEKIDYSMFFLESVLVPPTKFRPPTTGGDSVMEHPQTVGLNKVIESNNILGNACTNKLDQSKVIFRWRNLQESVNVLFDSKTATVQSQRDSSGICQLLEKKEGLFRQKMMGKRVNHACRSVISPDPYIAVNDIGIPPCFALKLTYPERVTPWNVEKLREAIINGPDIHPGATHYSDKSSTMKLPSTEKARRAIARKLLSSRGATTELGKTCDINFEGKTVHRHMRDGDIVLVNRQPTLHKPSLMAHKVRVLKGEKTLRLHYANCSTYNADFDGDEMNVHFPQDEISRAEAYNIVNANNQYARPSNGEPLRALIQDHIVSSVLLTKRDTFLDKDHFNQLLFSSGVTDMVLSTFSGRSGKKVMVSASDAELLTVTPAILKPVPLWTGKQVITAVLNQITKGHPPFTVEKATKLPVDFFKCRSREVKPNSGDLTKKKEIDESWKQNLNEDKLHIRKNEFVCGVIDKAQFADYGLVHTVHELYGSNAAGNLLSVFSRLFTVFLQTHGFTCGVDDLIILKDMDEERTKQLQECENVGERVLRKTFGIDVDVQIDPQDMRSRIERILYEDGESALASLDRSIVNYLNQCSSKGVMNDLLSDGLLKTPGRNCISLMTISGAKGSKVNFQQISSHLGQQDLEGKRVPRMVSGKTLPCFHPWDWSPRAGGFISDRFLSGLRPQEYYFHCMAGREGLVDTAVKTSRSGYLQRCLMKNLESLKVNYDCTVRDADGSIIQFQYGEDGVDVHRSSFIEKFKELTINQDMVLQKCSEDMLSGASSYISDLPISLKKGAEKFVEAMPMNERIASKFVRQEELLKLVKSKFFASLAQPGEPVGVLAAQSVGEPSTQMTLNTFHLAGRGEMNVTLGIPRLQEILMTAAANIKTPIMTCPLLKGKTKEDANDITDRLRKITVADIIKSMELSVVPYTVYENEVCSIHKLKINLYKPEHYPKHTDITEEDWEETMRAVFLRKLEDAIETHMKMLHRIRGIHNDVTGPIAGNETDNDDSVSGKQNEDDGDDDGEGTEVDDLGSDAQKQKKQETDEMDYEENSEDETNEPSSISGVEDPEMDSENEDTEVSKEDTPEPQEESMEPQKEVKGVKNVKEQSKKKRRKFVRAKSDRHIFVKGEGEKFEVHFKFATDDPHILLAQIAQQTAQKVYIQNSGKIERCTVANCGDPQVIYHGDNPKERREISNDEKKASPALHASGVDFPALWEFQDKLDVRYLYSNSIHDMLNIFGVEAARETIIREINHVFKSYGISVSIRHLNLIADYMTFSGGYRPMSRMGGIAESTSPFCRMTFETATKFIVQAATYGEKDTLETPSARICLGLPALSGTGCFDLMQRVEL.

6 residues coordinate Zn(2+): Cys-79, Cys-82, Cys-89, His-92, Cys-119, and Cys-122. The interval 154 to 185 (ESNTPTKSKSSDESCESVVTTDSSEECEDSDV) is disordered. A compositionally biased stretch (acidic residues) spans 176 to 185 (SSEECEDSDV). Positions 213 and 216 each coordinate Zn(2+). The segment at 255–293 (TSSVENPDGFDDSGIDALSEVEDGDKETREKSTEVAAEF) is disordered. The span at 262 to 279 (DGFDDSGIDALSEVEDGD) shows a compositional bias: acidic residues. Over residues 280–293 (KETREKSTEVAAEF) the composition is skewed to basic and acidic residues. Mg(2+) is bound by residues Asp-602, Asp-604, and Asp-606. A bridging helix region spans residues 1005 to 1017 (PQEYYFHCMAGRE). A disordered region spans residues 1318–1437 (TGPIAGNETD…EQSKKKRRKF (120 aa)). Composition is skewed to acidic residues over residues 1339–1354 (DDGD…DDLG), 1366–1379 (DEMD…DETN), and 1388–1399 (EDPEMDSENEDT). Positions 1415 to 1429 (EPQKEVKGVKNVKEQ) are enriched in basic and acidic residues.

Belongs to the RNA polymerase beta' chain family. As to quaternary structure, component of the RNA polymerase I (Pol I) complex consisting of at least 13 subunits.

It localises to the nucleus. It carries out the reaction RNA(n) + a ribonucleoside 5'-triphosphate = RNA(n+1) + diphosphate. In terms of biological role, DNA-dependent RNA polymerase catalyzes the transcription of DNA into RNA using the four ribonucleoside triphosphates as substrates. Largest and catalytic core component of RNA polymerase I which synthesizes ribosomal RNA precursors. Forms the polymerase active center together with the second largest subunit. A single stranded DNA template strand of the promoter is positioned within the central active site cleft of Pol I. A bridging helix emanates from NRPA1 and crosses the cleft near the catalytic site and is thought to promote translocation of Pol I by acting as a ratchet that moves the RNA-DNA hybrid through the active site by switching from straight to bent conformations at each step of nucleotide addition. This Arabidopsis thaliana (Mouse-ear cress) protein is DNA-directed RNA polymerase I subunit 1.